Here is a 238-residue protein sequence, read N- to C-terminus: MLVIPAVDMKNKKCVQLIQGNPDKKHVELDNPPEIAKKWVSEGAEMLHLVDLDGALDGKRVNDEFIEDIIKTSGVPVQIGGGIRSIEDAVYLIEKGAEKVIIGTVAVENPEIIRELSKKIGSEKIMVSLDAKDGKVVIKGWKEKTKYTPVEIGKILEEMGAGSILFTNVDSEGLLNGINIEPTKELVDNLKIPIVASGGVTTIDDLLKFKKIGVYGVVVGSAIYKNLINLKDAIEAVK.

D8 serves as the catalytic Proton acceptor. Catalysis depends on D130, which acts as the Proton donor.

The protein belongs to the HisA/HisF family.

The protein resides in the cytoplasm. It carries out the reaction 1-(5-phospho-beta-D-ribosyl)-5-[(5-phospho-beta-D-ribosylamino)methylideneamino]imidazole-4-carboxamide = 5-[(5-phospho-1-deoxy-D-ribulos-1-ylimino)methylamino]-1-(5-phospho-beta-D-ribosyl)imidazole-4-carboxamide. It functions in the pathway amino-acid biosynthesis; L-histidine biosynthesis; L-histidine from 5-phospho-alpha-D-ribose 1-diphosphate: step 4/9. This chain is 1-(5-phosphoribosyl)-5-[(5-phosphoribosylamino)methylideneamino] imidazole-4-carboxamide isomerase, found in Methanococcus maripaludis (strain C7 / ATCC BAA-1331).